We begin with the raw amino-acid sequence, 113 residues long: Large ribosomal subunit protein uL22 (113 aa).

This sequence belongs to the universal ribosomal protein uL22 family. Part of the 50S ribosomal subunit.

Its function is as follows. This protein binds specifically to 23S rRNA; its binding is stimulated by other ribosomal proteins, e.g. L4, L17, and L20. It is important during the early stages of 50S assembly. It makes multiple contacts with different domains of the 23S rRNA in the assembled 50S subunit and ribosome. In terms of biological role, the globular domain of the protein is located near the polypeptide exit tunnel on the outside of the subunit, while an extended beta-hairpin is found that lines the wall of the exit tunnel in the center of the 70S ribosome. This chain is Large ribosomal subunit protein uL22, found in Anoxybacillus flavithermus (strain DSM 21510 / WK1).